A 446-amino-acid chain; its full sequence is 3-phosphoshikimate 1-carboxyvinyltransferase (446 aa).

3-phosphoshikimate is bound by residues Lys21, Ser22, and Arg26. Lys21 is a phosphoenolpyruvate binding site. Gly94 and Arg122 together coordinate phosphoenolpyruvate. 3-phosphoshikimate-binding residues include Ser167, Gln169, Asp315, and Lys342. Gln169 is a phosphoenolpyruvate binding site. Catalysis depends on Asp315, which acts as the Proton acceptor. Residues Arg346 and Arg388 each contribute to the phosphoenolpyruvate site.

Belongs to the EPSP synthase family. In terms of assembly, monomer.

Its subcellular location is the cytoplasm. The catalysed reaction is 3-phosphoshikimate + phosphoenolpyruvate = 5-O-(1-carboxyvinyl)-3-phosphoshikimate + phosphate. It participates in metabolic intermediate biosynthesis; chorismate biosynthesis; chorismate from D-erythrose 4-phosphate and phosphoenolpyruvate: step 6/7. Functionally, catalyzes the transfer of the enolpyruvyl moiety of phosphoenolpyruvate (PEP) to the 5-hydroxyl of shikimate-3-phosphate (S3P) to produce enolpyruvyl shikimate-3-phosphate and inorganic phosphate. The chain is 3-phosphoshikimate 1-carboxyvinyltransferase from Alkalilimnicola ehrlichii (strain ATCC BAA-1101 / DSM 17681 / MLHE-1).